Here is a 201-residue protein sequence, read N- to C-terminus: dITP/XTP pyrophosphatase (201 aa).

Position 8 to 13 (8 to 13) interacts with substrate; it reads SNNPGK. Positions 40 and 69 each coordinate Mg(2+). The Proton acceptor role is filled by Asp-69. Substrate is bound by residues Ser-70, 155-158, Lys-178, and 183-184; these read FGYD and HR.

It belongs to the HAM1 NTPase family. In terms of assembly, homodimer. Mg(2+) is required as a cofactor.

The catalysed reaction is XTP + H2O = XMP + diphosphate + H(+). It catalyses the reaction dITP + H2O = dIMP + diphosphate + H(+). The enzyme catalyses ITP + H2O = IMP + diphosphate + H(+). In terms of biological role, pyrophosphatase that catalyzes the hydrolysis of nucleoside triphosphates to their monophosphate derivatives, with a high preference for the non-canonical purine nucleotides XTP (xanthosine triphosphate), dITP (deoxyinosine triphosphate) and ITP. Seems to function as a house-cleaning enzyme that removes non-canonical purine nucleotides from the nucleotide pool, thus preventing their incorporation into DNA/RNA and avoiding chromosomal lesions. In Ralstonia nicotianae (strain ATCC BAA-1114 / GMI1000) (Ralstonia solanacearum), this protein is dITP/XTP pyrophosphatase.